The sequence spans 429 residues: Probable M18 family aminopeptidase 2 (429 aa).

3 residues coordinate Zn(2+): H82, H156, and H401.

This sequence belongs to the peptidase M18 family. Zn(2+) serves as cofactor.

This is Probable M18 family aminopeptidase 2 from Pseudomonas syringae pv. tomato (strain ATCC BAA-871 / DC3000).